The following is a 544-amino-acid chain: Prolyl 4-hydroxylase subunit alpha-3 (544 aa).

An N-terminal signal peptide occupies residues 1-24 (MGPGARLAALLVLLKLGVGDPAAA). The stretch at 227 to 260 (EDALDYLAFACYQVGNVSCALSLSREFLVYSPDN) is one TPR repeat. The N-linked (GlcNAc...) asparagine glycan is linked to N242. Residues 422–529 (YAEYLQVVNY…KWVANKWIHE (108 aa)) form the Fe2OG dioxygenase domain. Fe cation-binding residues include H440 and D442. N482 is a glycosylation site (N-linked (GlcNAc...) asparagine). H510 contributes to the Fe cation binding site. K520 is a 2-oxoglutarate binding site.

It belongs to the P4HA family. Heterotetramer of two alpha-3 chains and two beta chains (the beta chain is the multi-functional PDI). Fe(2+) is required as a cofactor. The cofactor is L-ascorbate. In terms of processing, N-glycosylation plays no role in the catalytic activity.

It localises to the endoplasmic reticulum lumen. It catalyses the reaction L-prolyl-[collagen] + 2-oxoglutarate + O2 = trans-4-hydroxy-L-prolyl-[collagen] + succinate + CO2. Its function is as follows. Catalyzes the post-translational formation of 4-hydroxyproline in -Xaa-Pro-Gly- sequences in collagens and other proteins. This is Prolyl 4-hydroxylase subunit alpha-3 (P4ha3) from Rattus norvegicus (Rat).